Consider the following 349-residue polypeptide: MVRAKRKLDHIEYALSTGQSRTHGFHDIDFVHQSLPNSNYDTITCETKIGELSLSSPIFINAMTGGGGEKTLHINEQLAYVAKHHNLAMAVGSQMAALKDESEAASYKVIRKVNPNGIFFANLGSEATIEQAERAVDMIEANALQIHLNVIQELTMPEGDRDFTGVLQRIEKIVLNSKVPIIVKEVGFGMSKETMQQLVNVGVTAIDIGGQGGTNFAAVENERRQRMLSYFNNWGIQTATSIIEATSTNNNLSFIASGGIQTALDVAKAIALGANTTAFAGYFLRILMQDGIEKLVDEIELLHTDLKFIMTALGAKTIEELQSVPLVVKGETYHWLMQRGIDTAHYSRR.

Arg6–Lys7 serves as a coordination point for substrate. Residues Ala62 to Thr64, Ser93, and Asn122 contribute to the FMN site. Gln152 contributes to the substrate binding site. A Mg(2+)-binding site is contributed by Glu153. Residues Lys184, Thr214, Gly258–Gly259, and Ala280–Gly281 each bind FMN.

It belongs to the IPP isomerase type 2 family. As to quaternary structure, homooctamer. Dimer of tetramers. It depends on FMN as a cofactor. NADPH serves as cofactor. Mg(2+) is required as a cofactor.

It is found in the cytoplasm. It carries out the reaction isopentenyl diphosphate = dimethylallyl diphosphate. In terms of biological role, involved in the biosynthesis of isoprenoids. Catalyzes the 1,3-allylic rearrangement of the homoallylic substrate isopentenyl (IPP) to its allylic isomer, dimethylallyl diphosphate (DMAPP). In Bacillus cereus (strain ATCC 14579 / DSM 31 / CCUG 7414 / JCM 2152 / NBRC 15305 / NCIMB 9373 / NCTC 2599 / NRRL B-3711), this protein is Isopentenyl-diphosphate delta-isomerase.